A 619-amino-acid polypeptide reads, in one-letter code: Dihydroxy-acid dehydratase (619 aa).

D81 lines the Mg(2+) pocket. Residue C122 participates in [2Fe-2S] cluster binding. Positions 123 and 124 each coordinate Mg(2+). K124 carries the post-translational modification N6-carboxylysine. Residue C198 coordinates [2Fe-2S] cluster. Residue E494 participates in Mg(2+) binding. Catalysis depends on S520, which acts as the Proton acceptor.

It belongs to the IlvD/Edd family. As to quaternary structure, homodimer. The cofactor is [2Fe-2S] cluster. It depends on Mg(2+) as a cofactor.

It catalyses the reaction (2R)-2,3-dihydroxy-3-methylbutanoate = 3-methyl-2-oxobutanoate + H2O. It carries out the reaction (2R,3R)-2,3-dihydroxy-3-methylpentanoate = (S)-3-methyl-2-oxopentanoate + H2O. It participates in amino-acid biosynthesis; L-isoleucine biosynthesis; L-isoleucine from 2-oxobutanoate: step 3/4. It functions in the pathway amino-acid biosynthesis; L-valine biosynthesis; L-valine from pyruvate: step 3/4. Its function is as follows. Functions in the biosynthesis of branched-chain amino acids. Catalyzes the dehydration of (2R,3R)-2,3-dihydroxy-3-methylpentanoate (2,3-dihydroxy-3-methylvalerate) into 2-oxo-3-methylpentanoate (2-oxo-3-methylvalerate) and of (2R)-2,3-dihydroxy-3-methylbutanoate (2,3-dihydroxyisovalerate) into 2-oxo-3-methylbutanoate (2-oxoisovalerate), the penultimate precursor to L-isoleucine and L-valine, respectively. This is Dihydroxy-acid dehydratase from Neisseria meningitidis serogroup A / serotype 4A (strain DSM 15465 / Z2491).